Here is a 191-residue protein sequence, read N- to C-terminus: Potassium-transporting ATPase KdpC subunit (191 aa).

A helical transmembrane segment spans residues Leu11–Ala31.

It belongs to the KdpC family. In terms of assembly, the system is composed of three essential subunits: KdpA, KdpB and KdpC.

The protein resides in the cell inner membrane. In terms of biological role, part of the high-affinity ATP-driven potassium transport (or Kdp) system, which catalyzes the hydrolysis of ATP coupled with the electrogenic transport of potassium into the cytoplasm. This subunit acts as a catalytic chaperone that increases the ATP-binding affinity of the ATP-hydrolyzing subunit KdpB by the formation of a transient KdpB/KdpC/ATP ternary complex. This Dechloromonas aromatica (strain RCB) protein is Potassium-transporting ATPase KdpC subunit.